Reading from the N-terminus, the 432-residue chain is N-acylneuraminate cytidylyltransferase (432 aa).

Residues arginine 39, asparagine 49, arginine 98, serine 107, serine 109, and glutamine 130 each contribute to the substrate site. Residue arginine 188 is part of the active site.

Belongs to the CMP-NeuNAc synthase family. In terms of assembly, homotetramer; the active enzyme is formed by a dimer of dimers. Expressed in testis, ovary and liver.

It localises to the nucleus. It catalyses the reaction an N-acylneuraminate + CTP = a CMP-N-acyl-beta-neuraminate + diphosphate. Its pathway is amino-sugar metabolism; N-acetylneuraminate metabolism. Functionally, catalyzes the activation of N-acetylneuraminic acid (NeuNAc) to cytidine 5'-monophosphate N-acetylneuraminic acid (CMP-NeuNAc), a substrate required for the addition of sialic acid. This is N-acylneuraminate cytidylyltransferase (cmas) from Oncorhynchus mykiss (Rainbow trout).